Consider the following 892-residue polypeptide: Nitrogen assimilation transcription factor nirA (892 aa).

Positions 1-32 (MGEKLDPELSSDGPHTKSSSKGQGTSTDNAPA) are disordered. The span at 16–27 (TKSSSKGQGTST) shows a compositional bias: low complexity. The segment at residues 42–70 (CIACRRRKSKCDGNLPSCAACSSVYHTTC) is a DNA-binding region (zn(2)-C6 fungal-type). Disordered stretches follow at residues 646–714 (GPWD…SGPV), 731–761 (AHNE…SAQE), and 842–892 (PNIP…SFQR). A compositionally biased stretch (low complexity) spans 649-674 (DQAASPSTTSDSPPSVSSQSVVATTD). 3 stretches are compositionally biased toward polar residues: residues 675-714 (LSQP…SGPV), 746-761 (VSTS…SAQE), and 876-892 (NVNS…SFQR).

The protein resides in the nucleus. Functionally, pathway-specific regulatory gene of nitrate assimilation; it activates the transcription of the genes for nitrate and nitrite reductases (niaD and niiA). In Emericella nidulans (strain FGSC A4 / ATCC 38163 / CBS 112.46 / NRRL 194 / M139) (Aspergillus nidulans), this protein is Nitrogen assimilation transcription factor nirA (nirA).